The sequence spans 352 residues: C-glycoside deglycosidase alpha subunit (352 aa).

Glu147 is a binding site for Mn(2+). The Proton acceptor role is filled by His149. Mn(2+) contacts are provided by Asp179, His269, and Glu305.

It belongs to the C-glycoside deglycosidase alpha subunit family. In terms of assembly, heterodimer composed of an alpha subunit (CarB2) and a beta subunit (CarC2). A divalent metal cation is required as a cofactor.

It carries out the reaction 3''-dehydroorientin = 1,5-anhydro-D-erythro-hex-1-en-3-ulose + luteolin. Its activity is regulated as follows. Activity is strongly reduced in the presence of chelating agents. Carbon-carbon bond-cleaving enzyme which participates in the metabolism of C-glycosides. Acts on the C8-glycosylated compound 3''-dehydroorientin (3''-oxo-orientin). The sequence is that of C-glycoside deglycosidase alpha subunit from Arthrobacter globiformis (strain ATCC 8010 / DSM 20124 / JCM 1332 / NBRC 12137 / NCIMB 8907 / NRRL B-2979 / 168).